We begin with the raw amino-acid sequence, 143 residues long: Large ribosomal subunit protein uL11 (143 aa).

This sequence belongs to the universal ribosomal protein uL11 family. Part of the ribosomal stalk of the 50S ribosomal subunit. Interacts with L10 and the large rRNA to form the base of the stalk. L10 forms an elongated spine to which L12 dimers bind in a sequential fashion forming a multimeric L10(L12)X complex. In terms of processing, one or more lysine residues are methylated.

Its function is as follows. Forms part of the ribosomal stalk which helps the ribosome interact with GTP-bound translation factors. The protein is Large ribosomal subunit protein uL11 of Pseudomonas putida (strain ATCC 700007 / DSM 6899 / JCM 31910 / BCRC 17059 / LMG 24140 / F1).